The primary structure comprises 502 residues: Maturase K (502 aa).

This sequence belongs to the intron maturase 2 family. MatK subfamily.

The protein localises to the plastid. It localises to the chloroplast. Functionally, usually encoded in the trnK tRNA gene intron. Probably assists in splicing its own and other chloroplast group II introns. The polypeptide is Maturase K (Ehretia anacua (Sandpaper tree)).